A 197-amino-acid polypeptide reads, in one-letter code: Putative manganese efflux pump MntP (197 aa).

Helical transmembrane passes span 8–28, 43–63, 66–86, 123–143, 146–166, and 177–197; these read VILL…GLGA, VYAA…GYLL, VLLG…LIVL, LAIA…LLAL, WLAC…GIYL, and KAEI…MLFS.

It belongs to the MntP (TC 9.B.29) family.

The protein resides in the cell inner membrane. Functionally, probably functions as a manganese efflux pump. The polypeptide is Putative manganese efflux pump MntP (Psychrobacter arcticus (strain DSM 17307 / VKM B-2377 / 273-4)).